Here is a 182-residue protein sequence, read N- to C-terminus: Ribulose bisphosphate carboxylase small subunit, chloroplastic (182 aa).

Residues 1–58 (MASSMISSATIATVNCSSPAQANMVAPFTGLKSASAFPVTRKANNDITSLASNGGRVQ) constitute a chloroplast transit peptide.

Belongs to the RuBisCO small chain family. As to quaternary structure, heterohexadecamer of 8 large and 8 small subunits.

It localises to the plastid. It is found in the chloroplast. Its function is as follows. RuBisCO catalyzes two reactions: the carboxylation of D-ribulose 1,5-bisphosphate, the primary event in carbon dioxide fixation, as well as the oxidative fragmentation of the pentose substrate. Both reactions occur simultaneously and in competition at the same active site. Although the small subunit is not catalytic it is essential for maximal activity. In Gossypium hirsutum (Upland cotton), this protein is Ribulose bisphosphate carboxylase small subunit, chloroplastic.